The chain runs to 89 residues: Small ribosomal subunit protein uS15 (89 aa).

It belongs to the universal ribosomal protein uS15 family. Part of the 30S ribosomal subunit. Forms a bridge to the 50S subunit in the 70S ribosome, contacting the 23S rRNA.

Functionally, one of the primary rRNA binding proteins, it binds directly to 16S rRNA where it helps nucleate assembly of the platform of the 30S subunit by binding and bridging several RNA helices of the 16S rRNA. Its function is as follows. Forms an intersubunit bridge (bridge B4) with the 23S rRNA of the 50S subunit in the ribosome. The polypeptide is Small ribosomal subunit protein uS15 (Actinobacillus pleuropneumoniae serotype 5b (strain L20)).